The chain runs to 478 residues: Chromosomal replication initiator protein DnaA (478 aa).

A domain I, interacts with DnaA modulators region spans residues 1–71 (MKEFWQTCVS…EALAAEWFQR (71 aa)). A domain II region spans residues 71–140 (RPVQVAFELP…DAAGVVYERS (70 aa)). The interval 141–357 (RLNTDLTFDN…GALRKVLAYA (217 aa)) is domain III, AAA+ region. ATP contacts are provided by Gly-185, Gly-187, Lys-188, and Thr-189. Residues 358–478 (RFHGRDVLSV…LHVLEQTLKG (121 aa)) form a domain IV, binds dsDNA region.

The protein belongs to the DnaA family. As to quaternary structure, oligomerizes as a right-handed, spiral filament on DNA at oriC.

It is found in the cytoplasm. Plays an essential role in the initiation and regulation of chromosomal replication. ATP-DnaA binds to the origin of replication (oriC) to initiate formation of the DNA replication initiation complex once per cell cycle. Binds the DnaA box (a 9 base pair repeat at the origin) and separates the double-stranded (ds)DNA. Forms a right-handed helical filament on oriC DNA; dsDNA binds to the exterior of the filament while single-stranded (ss)DNA is stabiized in the filament's interior. The ATP-DnaA-oriC complex binds and stabilizes one strand of the AT-rich DNA unwinding element (DUE), permitting loading of DNA polymerase. After initiation quickly degrades to an ADP-DnaA complex that is not apt for DNA replication. Binds acidic phospholipids. This Bordetella petrii (strain ATCC BAA-461 / DSM 12804 / CCUG 43448) protein is Chromosomal replication initiator protein DnaA.